The primary structure comprises 358 residues: 3-dehydroquinate synthase (358 aa).

Residues 105–109 (GVVGD), 129–130 (TT), Lys142, Lys151, and 169–172 (TLKT) each bind NAD(+). Residues Glu184, His245, and His262 each coordinate Zn(2+).

This sequence belongs to the sugar phosphate cyclases superfamily. Dehydroquinate synthase family. Requires NAD(+) as cofactor. Co(2+) is required as a cofactor. It depends on Zn(2+) as a cofactor.

The protein localises to the cytoplasm. It carries out the reaction 7-phospho-2-dehydro-3-deoxy-D-arabino-heptonate = 3-dehydroquinate + phosphate. The protein operates within metabolic intermediate biosynthesis; chorismate biosynthesis; chorismate from D-erythrose 4-phosphate and phosphoenolpyruvate: step 2/7. In terms of biological role, catalyzes the conversion of 3-deoxy-D-arabino-heptulosonate 7-phosphate (DAHP) to dehydroquinate (DHQ). This Enterococcus faecalis (strain ATCC 47077 / OG1RF) protein is 3-dehydroquinate synthase.